We begin with the raw amino-acid sequence, 134 residues long: Small ribosomal subunit protein uS12 (134 aa).

The tract at residues 1–26 is disordered; it reads MPTIQQLVRKGRESFADKSKSPALNS. Over residues 10 to 20 the composition is skewed to basic and acidic residues; it reads KGRESFADKSK. Position 89 is a 3-methylthioaspartic acid (Asp89). A disordered region spans residues 103-134; the sequence is DTAGVNGRTQRRSKYGAKRPKPGQAPAAKGKK. Residues 111-123 show a composition bias toward basic residues; it reads TQRRSKYGAKRPK. A compositionally biased stretch (low complexity) spans 124-134; it reads PGQAPAAKGKK.

Belongs to the universal ribosomal protein uS12 family. In terms of assembly, part of the 30S ribosomal subunit. Contacts proteins S8 and S17. May interact with IF1 in the 30S initiation complex.

In terms of biological role, with S4 and S5 plays an important role in translational accuracy. Functionally, interacts with and stabilizes bases of the 16S rRNA that are involved in tRNA selection in the A site and with the mRNA backbone. Located at the interface of the 30S and 50S subunits, it traverses the body of the 30S subunit contacting proteins on the other side and probably holding the rRNA structure together. The combined cluster of proteins S8, S12 and S17 appears to hold together the shoulder and platform of the 30S subunit. The polypeptide is Small ribosomal subunit protein uS12 (Porphyromonas gingivalis (strain ATCC BAA-308 / W83)).